The primary structure comprises 412 residues: Probable beta-1,4-xylosyltransferase IRX10 (412 aa).

A helical; Signal-anchor for type II membrane protein transmembrane segment spans residues 1 to 21; it reads MKIHSCLSAILLFLFFSASSA. Over 22 to 412 the chain is Lumenal; sequence KQNVRTERIS…AGPVADLKPW (391 aa). N139 and N400 each carry an N-linked (GlcNAc...) asparagine glycan.

It belongs to the glycosyltransferase 47 family. In terms of tissue distribution, limited to xylem cells. Expressed in the root tip, xylem cells of roots, and in the vasculature of roots, cotyledons and leaves.

It localises to the golgi apparatus membrane. Involved in the synthesis of the hemicellulose glucuronoxylan, a major component of secondary cell walls. Probably involved in the elongation of glucuronoxylan xylosyl backbone, especially in the formation of GlcUA side chain of xylans. The chain is Probable beta-1,4-xylosyltransferase IRX10 (IRX10) from Arabidopsis thaliana (Mouse-ear cress).